A 37-amino-acid polypeptide reads, in one-letter code: Large ribosomal subunit protein bL36 (37 aa).

Belongs to the bacterial ribosomal protein bL36 family.

In Aquifex aeolicus (strain VF5), this protein is Large ribosomal subunit protein bL36.